The chain runs to 134 residues: Probable glycine cleavage system H protein (134 aa).

Positions 29–110 constitute a Lipoyl-binding domain; sequence TVLVGITDYA…PYEAWIAKIK (82 aa). Lys-70 carries the N6-lipoyllysine modification.

The protein belongs to the GcvH family. In terms of assembly, the glycine cleavage system is composed of four proteins: P, T, L and H. (R)-lipoate serves as cofactor.

In terms of biological role, the glycine cleavage system catalyzes the degradation of glycine. The H protein shuttles the methylamine group of glycine from the P protein to the T protein. The protein is Probable glycine cleavage system H protein of Pyrococcus furiosus (strain ATCC 43587 / DSM 3638 / JCM 8422 / Vc1).